The sequence spans 631 residues: 30-kDa cleavage and polyadenylation specificity factor 30 (631 aa).

A disordered region spans residues 12–38 (EGGLDSGPVQNTASVPVAPPENSSSAA). 3 C3H1-type zinc fingers span residues 60 to 87 (SFRQ…HQFD), 88 to 112 (KARM…VYKH), and 114 to 141 (NEDI…HAKL). The tract at residues 179 to 234 (QDRPQGQVPMQGQPQESGNLQQQQQQQPQQSQHQVSQTLIPNPADQTNRTSHPLPQ) is disordered. The segment covering 182–215 (PQGQVPMQGQPQESGNLQQQQQQQPQQSQHQVSQ) has biased composition (low complexity). Positions 216 to 231 (TLIPNPADQTNRTSHP) are enriched in polar residues. The 136-residue stretch at 237–372 (NRYFVVKSNN…SVGEQLASLL (136 aa)) folds into the YTH domain. The span at 392–407 (EEEKAKGVNPESRAEN) shows a compositional bias: basic and acidic residues. Disordered regions lie at residues 392–447 (EEEK…RGIM) and 541–631 (PHMG…KKRR). Residues 412–432 (PFEDNEEEEEEEDESEEEEES) show a composition bias toward acidic residues. Basic and acidic residues predominate over residues 573-583 (KTPERSDERGV). Phosphoserine is present on residues S610 and S612. Residues 621 to 631 (RSRHGEGKKRR) are compositionally biased toward basic residues.

Belongs to the CPSF4/YTH1 family. As to quaternary structure, component of the cleavage and polyadenylation specificity factor (CPSF) complex. Can form homodimers. Binds to calmodulin. Forms a complex with cleavage and polyadenylation specificity factor (CPSF) subunits CPSF73-I, CPSF73-II, CPSF100, CPSF160, CFIS2, FIPS3, FIPS5, PAPS2, PAPS3, CLPS3, PCFS1, PCFS4, CSTF50 and CSTF77. Expressed in seedlings, roots, leaves, siliques, stems and flowers.

It is found in the nucleus. Its subcellular location is the cytoplasm. Its activity is regulated as follows. Endonuclease activity is repressed by the N-terminal domain of FIPS5. Nuclease activity is inhibited by zinc (&gt;100 uM), cadmium in a progressive manner (50 percent activity at 1 mM Cd(2+)), and high salt levels (e.g. KCl or NaCl &gt;600 mM). Stimulated by ATP in the presence of Zn(2+), even at inhibitory zinc concentrations. Elevated temperatures prevent RNA-binding at 55 degrees Celsius, but endonuclease activity at 70 degrees Celsius. The sulfhydryl reagent dithiothreitol (DTT) inhibits both RNA-binding and nuclease activities. Component of the cleavage and polyadenylation specificity factor (CPSF) complex that play a key role in pre-mRNA 3'-end formation. May interact with poly(A) polymerase and other factors to bring about cleavage and poly(A) addition. Mediates poly(A) site selection. Binds RNA in a calcium-dependent manner. Exhibits endonuclease activity with an ability to nick and degrade linear as well as circular single-stranded RNA that leaves RNA 3' ends with hydroxyl groups, thus mediating processing of the pre-mRNA as a prelude to the polyadenylation. Involved in the post-transcriptional control, probably via poly(A) addition, of the responses of plants to stress, especially genes mediating tolerance to oxidative stress. Plays a role in the regulation of salicylic acid (SA) production via the control of messenger RNA 3' end processing, thus being a key component of programmed cell death and plant immune responses required for resistance to virulent Pseudomonas syringae pv tomato DC3000 (Pst). The chain is 30-kDa cleavage and polyadenylation specificity factor 30 from Arabidopsis thaliana (Mouse-ear cress).